Reading from the N-terminus, the 401-residue chain is Methionine import ATP-binding protein MetN (401 aa).

Residues 6-248 (ITFDHVVKEF…PQQPVTKRFI (243 aa)) enclose the ABC transporter domain. Residue 45 to 52 (GYSGAGKS) participates in ATP binding.

Belongs to the ABC transporter superfamily. Methionine importer (TC 3.A.1.24) family. As to quaternary structure, the complex is composed of two ATP-binding proteins (MetN), two transmembrane proteins (MetI) and a solute-binding protein (MetQ).

The protein localises to the cell membrane. The enzyme catalyses L-methionine(out) + ATP + H2O = L-methionine(in) + ADP + phosphate + H(+). The catalysed reaction is D-methionine(out) + ATP + H2O = D-methionine(in) + ADP + phosphate + H(+). In terms of biological role, part of the ABC transporter complex MetNIQ involved in methionine import. Responsible for energy coupling to the transport system. This chain is Methionine import ATP-binding protein MetN, found in Bifidobacterium longum (strain NCC 2705).